A 782-amino-acid polypeptide reads, in one-letter code: Endonuclease MutS2 (782 aa).

Residue Gly-336–Thr-343 participates in ATP binding. The region spanning Leu-707–Lys-782 is the Smr domain.

The protein belongs to the DNA mismatch repair MutS family. MutS2 subfamily. As to quaternary structure, homodimer. Binds to stalled ribosomes, contacting rRNA.

Functionally, endonuclease that is involved in the suppression of homologous recombination and thus may have a key role in the control of bacterial genetic diversity. In terms of biological role, acts as a ribosome collision sensor, splitting the ribosome into its 2 subunits. Detects stalled/collided 70S ribosomes which it binds and splits by an ATP-hydrolysis driven conformational change. Acts upstream of the ribosome quality control system (RQC), a ribosome-associated complex that mediates the extraction of incompletely synthesized nascent chains from stalled ribosomes and their subsequent degradation. Probably generates substrates for RQC. The chain is Endonuclease MutS2 from Staphylococcus aureus (strain MSSA476).